The chain runs to 387 residues: Cysteine desulfurase IscS (387 aa).

Pyridoxal 5'-phosphate is bound by residues 73–74 (AT), asparagine 155, glutamine 183, and 203–205 (SAH). N6-(pyridoxal phosphate)lysine is present on lysine 206. Threonine 241 is a binding site for pyridoxal 5'-phosphate. Catalysis depends on cysteine 328, which acts as the Cysteine persulfide intermediate. [2Fe-2S] cluster is bound at residue cysteine 328.

Belongs to the class-V pyridoxal-phosphate-dependent aminotransferase family. NifS/IscS subfamily. In terms of assembly, homodimer. Forms a heterotetramer with IscU, interacts with other sulfur acceptors. Requires pyridoxal 5'-phosphate as cofactor.

The protein resides in the cytoplasm. The catalysed reaction is (sulfur carrier)-H + L-cysteine = (sulfur carrier)-SH + L-alanine. It functions in the pathway cofactor biosynthesis; iron-sulfur cluster biosynthesis. Master enzyme that delivers sulfur to a number of partners involved in Fe-S cluster assembly, tRNA modification or cofactor biosynthesis. Catalyzes the removal of elemental sulfur atoms from cysteine to produce alanine. Functions as a sulfur delivery protein for Fe-S cluster synthesis onto IscU, an Fe-S scaffold assembly protein, as well as other S acceptor proteins. The polypeptide is Cysteine desulfurase IscS (Helicobacter pylori (strain ATCC 700392 / 26695) (Campylobacter pylori)).